A 474-amino-acid chain; its full sequence is tRNA-2-methylthio-N(6)-dimethylallyladenosine synthase (474 aa).

The 118-residue stretch at lysine 3–glycine 120 folds into the MTTase N-terminal domain. 6 residues coordinate [4Fe-4S] cluster: cysteine 12, cysteine 49, cysteine 83, cysteine 157, cysteine 161, and cysteine 164. A Radical SAM core domain is found at arginine 143 to glutamate 375. One can recognise a TRAM domain in the interval arginine 378–arginine 441.

The protein belongs to the methylthiotransferase family. MiaB subfamily. As to quaternary structure, monomer. Requires [4Fe-4S] cluster as cofactor.

The protein localises to the cytoplasm. The enzyme catalyses N(6)-dimethylallyladenosine(37) in tRNA + (sulfur carrier)-SH + AH2 + 2 S-adenosyl-L-methionine = 2-methylsulfanyl-N(6)-dimethylallyladenosine(37) in tRNA + (sulfur carrier)-H + 5'-deoxyadenosine + L-methionine + A + S-adenosyl-L-homocysteine + 2 H(+). Its function is as follows. Catalyzes the methylthiolation of N6-(dimethylallyl)adenosine (i(6)A), leading to the formation of 2-methylthio-N6-(dimethylallyl)adenosine (ms(2)i(6)A) at position 37 in tRNAs that read codons beginning with uridine. This Yersinia enterocolitica serotype O:8 / biotype 1B (strain NCTC 13174 / 8081) protein is tRNA-2-methylthio-N(6)-dimethylallyladenosine synthase.